Consider the following 235-residue polypeptide: Phosphoribosylaminoimidazole-succinocarboxamide synthase (235 aa).

It belongs to the SAICAR synthetase family.

It catalyses the reaction 5-amino-1-(5-phospho-D-ribosyl)imidazole-4-carboxylate + L-aspartate + ATP = (2S)-2-[5-amino-1-(5-phospho-beta-D-ribosyl)imidazole-4-carboxamido]succinate + ADP + phosphate + 2 H(+). Its pathway is purine metabolism; IMP biosynthesis via de novo pathway; 5-amino-1-(5-phospho-D-ribosyl)imidazole-4-carboxamide from 5-amino-1-(5-phospho-D-ribosyl)imidazole-4-carboxylate: step 1/2. This Thermococcus kodakarensis (strain ATCC BAA-918 / JCM 12380 / KOD1) (Pyrococcus kodakaraensis (strain KOD1)) protein is Phosphoribosylaminoimidazole-succinocarboxamide synthase.